The chain runs to 634 residues: Sodium-dependent multivitamin transporter (634 aa).

12 consecutive transmembrane segments (helical) span residues 23-43 (FSVV…VIGL), 65-85 (MGCL…VAIL), 100-120 (FLGC…IPVF), 142-162 (ICGT…ALYA), 175-195 (LWLS…LGGL), 207-227 (LVMF…VGGL), 255-275 (FWTL…VNQA), 295-315 (AVFP…LVMF), 350-370 (LPGL…SSAF), 403-423 (FAYG…GSVL), 427-447 (LSIF…GLFF), and 455-475 (AIVG…GSIV). Asn-488 and Asn-497 each carry an N-linked (GlcNAc...) asparagine glycan. The chain crosses the membrane as a helical span at residues 526-546 (LWYSAHNSTTVIVVGLIVSLL).

The protein belongs to the sodium:solute symporter (SSF) (TC 2.A.21) family. As to quaternary structure, interacts with PDZD11. Expressed in the intestinal mucosa, liver and kidney (at protein level). Expressed in the colon.

The protein resides in the cell membrane. Its subcellular location is the apical cell membrane. The enzyme catalyses biotin(out) + 2 Na(+)(out) = biotin(in) + 2 Na(+)(in). It catalyses the reaction (R)-pantothenate(out) + 2 Na(+)(out) = (R)-pantothenate(in) + 2 Na(+)(in). It carries out the reaction (R)-lipoate(out) + 2 Na(+)(out) = (R)-lipoate(in) + 2 Na(+)(in). The catalysed reaction is iodide(out) + 2 Na(+)(out) = iodide(in) + 2 Na(+)(in). Sodium-dependent multivitamin transporter that mediates the electrogenic transport of pantothenate, biotin, lipoate and iodide. Functions as a Na(+)-coupled substrate symporter where the stoichiometry of Na(+):substrate is 2:1, creating an electrochemical Na(+) gradient used as driving force for substrate uptake. Required for biotin and pantothenate uptake in the intestine across the brush border membrane. Plays a role in the maintenance of intestinal mucosa integrity, by providing the gut mucosa with biotin. Contributes to the luminal uptake of biotin and pantothenate into the brain across the blood-brain barrier. In Mus musculus (Mouse), this protein is Sodium-dependent multivitamin transporter.